The primary structure comprises 459 residues: MDITKGSLDEIARPASSSRSRPGSRVSTSLSTEKPKRSSTSLSLEILNPEPGFSEMPSQLCLGLETCETHLEAGRKTPIEHHDQLLGQKHFSKNSAEDYECHRRDEINFDHPFPQKEIDLLSHESEDEFLDLPSAEFEDACENDEDPKDDQDIADDKAIDPKMERAIKRMQALDDILQRKLAKEKEVKAQGLEIRIKLWEELQRATIQSSARSHEENMNTSKFLALTPQLDEMEDAASVQMCNIFSPVFPTQLPNEDPVEDDDHKTLQGNMTGADSSDRSDCKTRHSKGQKKEVDFIQRNIELAKDAGAYILLMDDEKLRLEQLLEDIQEGCSDEDITGDVSGWIVPGEGYTPEPDEYDQLAEIDSRLQMVRCSEESLETSLSDSRILKEVFQEVLLEKNGNSDSAPGEQVLRNTKELRDQKMRLREIDQQLQDMERNSITPMSLVSRYSFSADSPVYA.

The tract at residues 1 to 54 (MDITKGSLDEIARPASSSRSRPGSRVSTSLSTEKPKRSSTSLSLEILNPEPGFS) is disordered. Over residues 13-29 (RPASSSRSRPGSRVSTS) the composition is skewed to low complexity. The stretch at 162–202 (KMERAIKRMQALDDILQRKLAKEKEVKAQGLEIRIKLWEEL) forms a coiled coil. The disordered stretch occupies residues 252 to 289 (QLPNEDPVEDDDHKTLQGNMTGADSSDRSDCKTRHSKG). Basic and acidic residues predominate over residues 276 to 289 (SSDRSDCKTRHSKG).

It belongs to the FSIP1 family.

This chain is Fibrous sheath-interacting protein 1 (fsip1), found in Xenopus laevis (African clawed frog).